The primary structure comprises 887 residues: MAEKELAKVYEPTAVERKWYETWEQEGYFRANPDSGKPSYSIVIPPPNVTGALHMGHALNNTLQDILCRWKRMNGYEVLWMPGTDHAGIATQNVVERQLAGEGTSRHELGREAFIERVWKWKAESGGQIIGQLKRLGASCDWGRERFTMDEGLSRAVREVFVRLYEEGLIYRDNRLINWCPRCHTALSDIEVEHEDKAGNLWHIRYPVVGEPGRFVVVATTRPETMLGDTAVAVHPEDERYADLVGKKVLLPLVNREIPVVADGYVDREFGTGVVKITPAHDFNDFEVGRRHNLDLLNVFDESAVVNSAGHQYEGMERFAARKRVVEDLEALGLLEKIDDHAHAVGGCYRCKTVVEPYLSLQWYVKVGPLAERALAAVKDGRTRIVPQQWENTYYDWMENIKDWCISRQIWWGHRIPAWYCDHCGETTVAKIDPTVCAACGSDEIRQETDVLDTWFSSALWPFSTMGWPDRTPELAAFYPTSCLVTGFDILFFWVARMMMMGLHFMNEVPFSDVYIHALVRDAQGQKMSKSKGNVIDPLVVIDQYGTDAFRFTLAAFAAQGRDIKLAEERIAGYRNFVNKIWNASRFALMNLEGFEPDTVDPATLDLSNADRWILHRLNSAAAETAEALEAYRFNDAAGTLYRFTWSEFCDWYIELAKDDLYRGDDARKETARYVLWLVLENLLRLLHPFMPFITEEIWQTLPGARPAPSIMVAGYPRSVPERDFPDGAAEMELVMEVIRGIRNIRGEMDVAPSREIAAILSCGSAESLHLLKRNEVYVMSLARLSDLAIGQQLERPADAAIQVAGDVEIAVPLKGLVNVEEEEKRLLKEIGKLDKEIEMFGRKLENPSFVERAPADVVAKEREKLAEVTQKKDVLLASLEKIRKLA.

The 'HIGH' region signature appears at 47–57 (PNVTGALHMGH). Residues 527–531 (KMSKS) carry the 'KMSKS' region motif. K530 is an ATP binding site. A coiled-coil region spans residues 817-885 (LVNVEEEEKR…LLASLEKIRK (69 aa)).

The protein belongs to the class-I aminoacyl-tRNA synthetase family. ValS type 1 subfamily. In terms of assembly, monomer.

Its subcellular location is the cytoplasm. It catalyses the reaction tRNA(Val) + L-valine + ATP = L-valyl-tRNA(Val) + AMP + diphosphate. In terms of biological role, catalyzes the attachment of valine to tRNA(Val). As ValRS can inadvertently accommodate and process structurally similar amino acids such as threonine, to avoid such errors, it has a 'posttransfer' editing activity that hydrolyzes mischarged Thr-tRNA(Val) in a tRNA-dependent manner. The protein is Valine--tRNA ligase of Geobacter sulfurreducens (strain ATCC 51573 / DSM 12127 / PCA).